Here is a 321-residue protein sequence, read N- to C-terminus: Isoaspartyl peptidase (321 aa).

The active-site Nucleophile is Thr179. Residues Arg207–Asp210 and Thr230–Gly233 contribute to the substrate site.

It belongs to the Ntn-hydrolase family. In terms of assembly, heterotetramer of two alpha and two beta chains arranged as a dimer of alpha/beta heterodimers. Post-translationally, autocleaved. Generates the alpha and beta subunits. The N-terminal residue of the beta subunit is thought to be responsible for the nucleophile hydrolase activity. In terms of processing, both subunits undergo further processing at their C-termini. The overexpressed alpha subunit seems to consist of residues 2-161, with an oxidized Met residue and a tightly coordinated Na(+), whereas the overexpressed beta subunit is processed to residue 315 and has 3 oxidized Met residues. Processing of the alpha subunit is inhibited by Zn(2+).

The enzyme catalyses Cleavage of a beta-linked Asp residue from the N-terminus of a polypeptide.. Degrades proteins damaged by L-isoaspartyl residue formation (also known as beta-Asp residues). Degrades L-isoaspartyl-containing di- and maybe also tripeptides. Also has L-asparaginase activity, although this may not be its principal function. Functionally, may be involved in glutathione, and possibly other peptide, transport, although these results could also be due to polar effects of disruption. This chain is Isoaspartyl peptidase (iaaA), found in Escherichia coli (strain K12).